Reading from the N-terminus, the 56-residue chain is uncharacterized protein (56 aa).

This is an uncharacterized protein from Saccharolobus islandicus (Sulfolobus islandicus).